Reading from the N-terminus, the 510-residue chain is Ribose import ATP-binding protein RbsA 1 (510 aa).

2 ABC transporter domains span residues 20–256 and 266–510; these read LEMR…VGRD and VTLG…TGNA. An ATP-binding site is contributed by 52 to 59; the sequence is GENGAGKS.

The protein belongs to the ABC transporter superfamily. Ribose importer (TC 3.A.1.2.1) family. In terms of assembly, the complex is composed of an ATP-binding protein (RbsA), two transmembrane proteins (RbsC) and a solute-binding protein (RbsB).

It localises to the cell inner membrane. It catalyses the reaction D-ribose(out) + ATP + H2O = D-ribose(in) + ADP + phosphate + H(+). In terms of biological role, part of the ABC transporter complex RbsABC involved in ribose import. Responsible for energy coupling to the transport system. The polypeptide is Ribose import ATP-binding protein RbsA 1 (Agrobacterium fabrum (strain C58 / ATCC 33970) (Agrobacterium tumefaciens (strain C58))).